The following is a 248-amino-acid chain: MAGHSKWANIKHKKAKEDAKRGKIFTKLIREITVAARLGGGDKDANPRLRAAIATAFANNMSKDTVERAILKGAGGDDSANVEEVRYEGYGPGGVAIIVDCMTDNRNRTVGEVRHAFTKSGGNLGTDGSVAYMFTKKGIISFAPGVDEDALMEVALEAGAEDIITHEDGSIDVFTTPHDFSDVQEALIAKGFNSDNAEVTFDAETKAELDIEIAEKVMNLIDRLEDLDDVQNVYSNVNFTQELMEQLG.

This sequence belongs to the TACO1 family.

The protein localises to the cytoplasm. The polypeptide is Probable transcriptional regulatory protein Fphi_1565 (Francisella philomiragia subsp. philomiragia (strain ATCC 25017 / CCUG 19701 / FSC 153 / O#319-036)).